We begin with the raw amino-acid sequence, 396 residues long: G-protein coupled receptor 84 (396 aa).

The Extracellular portion of the chain corresponds to 1–26; it reads MWNSSDANFSCYHESVLGYRYVAVSW. Residues Asn3 and Asn8 are each glycosylated (N-linked (GlcNAc...) asparagine). Residues 27–47 form a helical membrane-spanning segment; it reads GVVVAVTGTVGNVLTLLALAI. Over 48-57 the chain is Cytoplasmic; that stretch reads QPKLRTRFNL. A helical transmembrane segment spans residues 58 to 78; it reads LIANLTLADLLYCTLLQPFSV. Residues 79 to 94 are Extracellular-facing; that stretch reads DTYLHLHWRTGATFCR. Residues 95–115 traverse the membrane as a helical segment; it reads VFGLLLFASNSVSILTLCLIA. Residues 116 to 144 are Cytoplasmic-facing; sequence LGRYLLIAHPKLFPQVFSAKGIVLALVST. Residues 145–165 form a helical membrane-spanning segment; that stretch reads WVVGVASFAPLWPIYILVPVV. Residues 166-180 lie on the Extracellular side of the membrane; that stretch reads CTCSFDRIRGRPYTT. The chain crosses the membrane as a helical span at residues 181–201; that stretch reads ILMGIYFVLGLSSVGIFYCLI. Topologically, residues 202–320 are cytoplasmic; the sequence is HRQVKRAAQA…SSEFGKVTRM (119 aa). Phosphoserine occurs at positions 221 and 224. Residues 244-311 form a disordered region; sequence RLASGGPSEG…KGARRAPDSS (68 aa). The span at 247–260 shows a compositional bias: low complexity; sequence SGGPSEGISSEPVS. Residues Thr263 and Thr264 each carry the phosphothreonine modification. The chain crosses the membrane as a helical span at residues 321–341; it reads CFAVFLCFALSYIPFLLLNIL. The Extracellular segment spans residues 342–352; it reads DARVQAPRVVH. A helical transmembrane segment spans residues 353-373; that stretch reads MLAANLTWLNGCINPVLYAAM. Residues 374–396 are Cytoplasmic-facing; that stretch reads NRQFRQAYGSILKRGPRSFHRLH.

Belongs to the G-protein coupled receptor 1 family. In terms of assembly, interacts with ARRB2 and ARR3. Phosphorylated by a subset of GPR84-activating ligands. Constitutively phosphorylated at Ser-221 and Ser-224 in the absence of 2-HTP. By contrast, Thr-263 and Thr-264 are phosphorylated only following prior cell treatment with 2-HTP. In terms of tissue distribution, expressed predominantly in hematopoietic tissues. High levels detected in the bone marrow and lower levels in the peripheral leukocytes and lung. Also expressed in brain, heart, muscle, colon, thymus, spleen, kidney, liver, placenta and intestine. Within the leukocyte population expression is higher in neutrophils and eosinophils relative to T- or B-lymphocytes.

It localises to the cell membrane. G protein-coupled receptor that responds endogenously to dietary fatty acids or nutrient, specifically medium-chain free fatty acid (FFA) with carbon chain lengths of C9 to C14. Capric acid (C10:0), undecanoic acid (C11:0) and lauric acid (C12:0) are the most potent agonists. In immune cells, functions as a pro-inflammatory receptor via 6-OAU and promotes the expression of pro-inflammatory mediators such as TNFalpha, IL-6 and IL-12B as well as stimulating chemotactic responses through activation of signaling mediators AKT, ERK and NF-kappa-B. In addition, triggers increased bacterial adhesion and phagocytosis in macrophages and regulates pro-inflammatory function via enhancing NLRP3 inflammasome activation. Also plays an important role in inflammation by modulating neutrophil functions. Mechanistically, promotes neutrophil chemotaxis, reactive oxygen species (ROS) production and degranulation via LYN-AKT/ERK pathway. To regulate ROS, communicates with the two formyl peptide receptors FPR2 and FPR1 to control the NADPH oxidase activity in neutrophils. In Homo sapiens (Human), this protein is G-protein coupled receptor 84 (GPR84).